The chain runs to 96 residues: Cytochrome b (96 aa).

Transmembrane regions (helical) follow at residues 1–15, 39–60, and 75–95; these read LCXI…FLAM, WLIR…YLHI, and WNVG…GYVL. Residues H45 and H59 each coordinate heme b.

Belongs to the cytochrome b family. The cytochrome bc1 complex contains 3 respiratory subunits (MT-CYB, CYC1 and UQCRFS1), 2 core proteins (UQCRC1 and UQCRC2) and probably 6 low-molecular weight proteins. Heme b serves as cofactor.

Its subcellular location is the mitochondrion inner membrane. Its function is as follows. Component of the ubiquinol-cytochrome c reductase complex (complex III or cytochrome b-c1 complex) that is part of the mitochondrial respiratory chain. The b-c1 complex mediates electron transfer from ubiquinol to cytochrome c. Contributes to the generation of a proton gradient across the mitochondrial membrane that is then used for ATP synthesis. This chain is Cytochrome b (mt-cyb), found in Geophagus steindachneri (Red hump earth eater).